Here is a 155-residue protein sequence, read N- to C-terminus: Ribosome maturation factor RimP (155 aa).

This sequence belongs to the RimP family.

The protein resides in the cytoplasm. Functionally, required for maturation of 30S ribosomal subunits. The sequence is that of Ribosome maturation factor RimP from Listeria welshimeri serovar 6b (strain ATCC 35897 / DSM 20650 / CCUG 15529 / CIP 8149 / NCTC 11857 / SLCC 5334 / V8).